Reading from the N-terminus, the 613-residue chain is MAIGVVKRNAGSSSDGTEDSDFSTDLEHTDSSESDGTSRRSARVTRSSARLSQSSQDSSPVRNLPSFGTEEPAYSTRRVTRSQQQPTPVTPKKYPLRQTRSSGSETEQVVDFSDRETKNTADHDESPPRTPTGNAPSSESDIDISSPNVSHDESIAKDMSLKDSGSDLSHRPKRRRFHESYNFNMKCPTPGCNSLGHLTGKHERHFSISGCPLYHNLSADECKVRAQSRDKQIEERMLSHRQDDNNRHATRHQAPTERQLRYKEKVAELRKKRNSGLSKEQKEKYMEHRQTYGNTREPLLENLTSEYDLDLFRRAQARASEDLEKLRLQGQITEGSNMIKTIAFGRYELDTWYHSPYPEEYARLGRLYMCEFCLKYMKSQTILRRHMAKCVWKHPPGDEIYRKGSISVFEVDGKKNKIYCQNLCLLAKLFLDHKTLYYDVEPFLFYVMTEADNTGCHLIGYFSKEKNSFLNYNVSCILTMPQYMRQGYGKMLIDFSYLLSKVEEKVGSPERPLSDLGLISYRSYWKEVLLRYLHNFQGKEISIKEISQETAVNPVDIVSTLQALQMLKYWKGKHLVLKRQDLIDEWIAKEAKRSNSNKTMDPSCLKWTPPKGT.

Residues 1 to 175 (MAIGVVKRNA…SDLSHRPKRR (175 aa)) are disordered. 5 positions are modified to phosphoserine: serine 12, serine 52, serine 55, serine 59, and serine 66. The segment covering 44-59 (VTRSSARLSQSSQDSS) has biased composition (low complexity). A phosphothreonine mark is found at threonine 87 and threonine 90. Polar residues predominate over residues 98–107 (QTRSSGSETE). Serine 104 is subject to Phosphoserine. Threonine 106 is modified (phosphothreonine). A compositionally biased stretch (basic and acidic residues) spans 112–127 (FSDRETKNTADHDESP). A phosphoserine mark is found at serine 113 and serine 126. Residue threonine 130 is modified to Phosphothreonine. The segment covering 136 to 147 (PSSESDIDISSP) has biased composition (low complexity). The span at 150–170 (SHDESIAKDMSLKDSGSDLSH) shows a compositional bias: basic and acidic residues. Phosphoserine is present on residues serine 160, serine 164, serine 166, and serine 180. A CCHHC-type zinc finger spans residues 178-221 (HESYNFNMKCPTPGCNSLGHLTGKHERHFSISGCPLYHNLSADE). N6-acetyllysine is present on residues lysine 201 and lysine 279. Lysine 325 is covalently cross-linked (Glycyl lysine isopeptide (Lys-Gly) (interchain with G-Cter in SUMO2)). Residues 334–609 (EGSNMIKTIA…MDPSCLKWTP (276 aa)) enclose the MYST-type HAT domain. Lysine 340 is covalently cross-linked (Glycyl lysine isopeptide (Lys-Gly) (interchain with G-Cter in ubiquitin)). The C2HC MYST-type zinc finger occupies 367 to 392 (LYMCEFCLKYMKSQTILRRHMAKCVW). Zn(2+)-binding residues include cysteine 370, cysteine 373, histidine 386, and cysteine 390. Lysine 434 carries the post-translational modification N6-acetyllysine; by autocatalysis. Acetyl-CoA-binding positions include 477–479 (ILT) and 485–490 (RQGYGK). At serine 508 the chain carries Phosphoserine. Glutamate 510 acts as the Proton donor/acceptor in catalysis. Acetyl-CoA contacts are provided by serine 514 and serine 523.

This sequence belongs to the MYST (SAS/MOZ) family. In terms of assembly, component of the HBO1 complex composed of KAT7/HBO1, MEAF6, ING4 or ING5, and one scaffold subunit: complexes containing BRPF scaffold (BRPF1, BRD1/BRPF2 or BRPF3) direct KAT7/HBO1 specificity towards H3K14ac, while complexes containing JADE scaffold (JADE1, JADE2 and JADE3) mediate acetylation of histone H4. Interacts with MCM2 and ORC1. Interacts with the androgen receptor (AR) in the presence of dihydrotestosterone. Interacts with CDT1. Interacts with MAP2K1 and CUL1. Interacts with p53/TP53; leading to inhibit histone acetyltransferase activity. In terms of processing, phosphorylated at Ser-52 and Ser-55 by ATR in response to DNA damage, promoting its ubiquitination by the CRL4(DDB2) complex and subsequent degradation. Phosphorylation at Ser-52 and Ser-55 by ATR in response to ultraviolet-induced DNA, promotes localization to DNA damage sites. Phosphorylation at Ser-59 by PLK1 during mitosis seems important for prereplicative complex formation and DNA replication licensing, and requires prior phosphorylation at Thr-87 and Thr-90 by CDK1. Phosphorylated by MAP2K1, which accelerates its degradation. Post-translationally, ubiquitinated at Lys-340, leading to proteasomal degradation. Ubiquitinated by the CRL4(DDB2) complex following phosphorylation by ATR, leading to its subsequent degradation. Autoacetylation at Lys-434 is required for proper function. As to expression, widely expressed in adult tissues.

The protein resides in the nucleus. The protein localises to the chromosome. Its subcellular location is the centromere. It is found in the cytoplasm. It localises to the cytosol. It carries out the reaction L-lysyl-[protein] + acetyl-CoA = N(6)-acetyl-L-lysyl-[protein] + CoA + H(+). With respect to regulation, histone acetyltransferase activity is inhibited by GMNN in the context of a complex with CDT1, inhibiting histone H4 acetylation and DNA replication licensing. In terms of biological role, catalytic subunit of histone acetyltransferase HBO1 complexes, which specifically mediate acetylation of histone H3 at 'Lys-14' (H3K14ac), thereby regulating various processes, such as gene transcription, protein ubiquitination, immune regulation, stem cell pluripotent and self-renewal maintenance and embryonic development. Some complexes also catalyze acetylation of histone H4 at 'Lys-5', 'Lys-8' and 'Lys-12' (H4K5ac, H4K8ac and H4K12ac, respectively), regulating DNA replication initiation, regulating DNA replication initiation. Specificity of the HBO1 complexes is determined by the scaffold subunit: complexes containing BRPF scaffold (BRPF1, BRD1/BRPF2 or BRPF3) direct KAT7/HBO1 specificity towards H3K14ac, while complexes containing JADE (JADE1, JADE2 and JADE3) scaffold direct KAT7/HBO1 specificity towards histone H4. H3K14ac promotes transcriptional elongation by facilitating the processivity of RNA polymerase II. Acts as a key regulator of hematopoiesis by forming a complex with BRD1/BRPF2, directing KAT7/HBO1 specificity towards H3K14ac and promoting erythroid differentiation. H3K14ac is also required for T-cell development. KAT7/HBO1-mediated acetylation facilitates two consecutive steps, licensing and activation, in DNA replication initiation: H3K14ac facilitates the activation of replication origins, and histone H4 acetylation (H4K5ac, H4K8ac and H4K12ac) facilitates chromatin loading of MCM complexes, promoting DNA replication licensing. Acts as a positive regulator of centromeric CENPA assembly: recruited to centromeres and mediates histone acetylation, thereby preventing centromere inactivation mediated by SUV39H1, possibly by increasing histone turnover/exchange. Involved in nucleotide excision repair: phosphorylation by ATR in response to ultraviolet irradiation promotes its localization to DNA damage sites, where it mediates histone acetylation to facilitate recruitment of XPC at the damaged DNA sites. Acts as an inhibitor of NF-kappa-B independently of its histone acetyltransferase activity. Functionally, plays a central role in the maintenance of leukemia stem cells in acute myeloid leukemia (AML). Acts by mediating acetylation of histone H3 at 'Lys-14' (H3K14ac), thereby facilitating the processivity of RNA polymerase II to maintain the high expression of key genes, such as HOXA9 and HOXA10 that help to sustain the functional properties of leukemia stem cells. The polypeptide is Histone acetyltransferase KAT7 (Mus musculus (Mouse)).